The sequence spans 217 residues: Orotidine 5'-phosphate decarboxylase (217 aa).

Residues Asp-14, Lys-36, 64 to 73 (DFKVADIPST), Ser-120, 172 to 182 (PGVGAQGGNLS), Gly-197, and Arg-198 contribute to the substrate site. Residue Lys-66 is the Proton donor of the active site.

This sequence belongs to the OMP decarboxylase family. Type 1 subfamily. Homodimer.

The catalysed reaction is orotidine 5'-phosphate + H(+) = UMP + CO2. The protein operates within pyrimidine metabolism; UMP biosynthesis via de novo pathway; UMP from orotate: step 2/2. In terms of biological role, catalyzes the decarboxylation of orotidine 5'-monophosphate (OMP) to uridine 5'-monophosphate (UMP). The protein is Orotidine 5'-phosphate decarboxylase of Methanococcus maripaludis (strain C6 / ATCC BAA-1332).